Consider the following 324-residue polypeptide: Fibronectin type III domain-containing protein 8 (324 aa).

Residues 179 to 280 form the Fibronectin type-III domain; sequence PDTPFIFEHT…KPYKFATLAT (102 aa).

In Macaca fascicularis (Crab-eating macaque), this protein is Fibronectin type III domain-containing protein 8 (FNDC8).